A 129-amino-acid polypeptide reads, in one-letter code: Virion-associated protein (129 aa).

Coiled coils occupy residues 1-31 and 38-59; these read MANLNQIQKEVSEILSDQKSMKSDIKAILEM and IKESLEAVAAKIVNDLTKLIND. Positions 122 to 129 are capsid binding; it reads PAGWPNQF.

The protein belongs to the caulimovirus ORF III family. Homotetramer, through coiled-coil domain. Homotrimer when interacts with icosehadral capsid. Interacts with capsid protein, and with Movement protein.

It localises to the virion. The protein localises to the host cell junction. The protein resides in the host plasmodesma. Its function is as follows. Plays a role in virus cell-to-cell and plant-to-plant transmission. Interacts with virion icosahedral capsid and movement protein, thereby facilitating virion cell-to-cell transmission through plasmodesmata opened by viral movement protein. Also interacts with aphid transmission factor, attaching the virion to aphid stylet when the animal feeds on an virus infected plant. Aphid saliva may later detach the virion, inducing release of infectious particles when the animal feeds on a new plant. The chain is Virion-associated protein from Arabidopsis thaliana (Mouse-ear cress).